The primary structure comprises 232 residues: Phosphatidylserine decarboxylase proenzyme (232 aa).

The Schiff-base intermediate with substrate; via pyruvic acid role is filled by Ser-201. At Ser-201 the chain carries Pyruvic acid (Ser); by autocatalysis.

It belongs to the phosphatidylserine decarboxylase family. PSD-A subfamily. As to quaternary structure, heterodimer of a large membrane-associated beta subunit and a small pyruvoyl-containing alpha subunit. Pyruvate is required as a cofactor. In terms of processing, is synthesized initially as an inactive proenzyme. Formation of the active enzyme involves a self-maturation process in which the active site pyruvoyl group is generated from an internal serine residue via an autocatalytic post-translational modification. Two non-identical subunits are generated from the proenzyme in this reaction, and the pyruvate is formed at the N-terminus of the alpha chain, which is derived from the carboxyl end of the proenzyme. The post-translation cleavage follows an unusual pathway, termed non-hydrolytic serinolysis, in which the side chain hydroxyl group of the serine supplies its oxygen atom to form the C-terminus of the beta chain, while the remainder of the serine residue undergoes an oxidative deamination to produce ammonia and the pyruvoyl prosthetic group on the alpha chain.

Its subcellular location is the cell membrane. It carries out the reaction a 1,2-diacyl-sn-glycero-3-phospho-L-serine + H(+) = a 1,2-diacyl-sn-glycero-3-phosphoethanolamine + CO2. It functions in the pathway phospholipid metabolism; phosphatidylethanolamine biosynthesis; phosphatidylethanolamine from CDP-diacylglycerol: step 2/2. Catalyzes the formation of phosphatidylethanolamine (PtdEtn) from phosphatidylserine (PtdSer). The protein is Phosphatidylserine decarboxylase proenzyme of Mycolicibacterium gilvum (strain PYR-GCK) (Mycobacterium gilvum (strain PYR-GCK)).